Consider the following 349-residue polypeptide: tRNA pseudouridine synthase D (349 aa).

Phe27 serves as a coordination point for substrate. Asp80 serves as the catalytic Nucleophile. Asn129 provides a ligand contact to substrate. The region spanning 155-303 is the TRUD domain; it reads GVPNYFGAQR…VEAARRAMLL (149 aa). Residue Phe329 coordinates substrate.

This sequence belongs to the pseudouridine synthase TruD family.

It catalyses the reaction uridine(13) in tRNA = pseudouridine(13) in tRNA. Functionally, responsible for synthesis of pseudouridine from uracil-13 in transfer RNAs. In Klebsiella pneumoniae (strain 342), this protein is tRNA pseudouridine synthase D.